The sequence spans 836 residues: Periostin (836 aa).

Residues 1–21 form the signal peptide; that stretch reads MIPFLPMFSLLLLLIVNPINA. One can recognise an EMI domain in the interval 40–94; sequence GPNVCALQQILGTKKKYFSTCKNWYKKSICGQKTTVLYECCPGYMRMEGMKGCPA. Cystine bridges form between C44/C80, C69/C333, C79/C92, C208/C311, and C467/C472. At C60 the chain carries S-cysteinyl cysteine. FAS1 domains are found at residues 97-230, 234-365, 368-492, and 496-628; these read PIDH…DRVL, GTSI…DQVL, DSAK…REII, and EKSL…DKLL. The N-linked (GlcNAc...) asparagine glycan is linked to N599.

Homodimer. Interacts with BMP1 and fibronectin. Gamma-carboxylation is controversial. Gamma-carboxyglutamated; gamma-carboxyglutamate residues are formed by vitamin K dependent carboxylation; this may be required for calcium binding. According to a more recent report, does not contain vitamin K-dependent gamma-carboxyglutamate residues. As to expression, widely expressed with highest levels in aorta, stomach, lower gastrointestinal tract, placenta, uterus, thyroid tissue and breast. Expressed in the kidney. Expressed in the lung. Up-regulated in epithelial ovarian tumors. Not expressed in normal ovaries. Also highly expressed at the tumor periphery of lung carcinoma tissue but not within the tumor. Overexpressed in breast cancers.

The protein localises to the golgi apparatus. It localises to the secreted. The protein resides in the extracellular space. Its subcellular location is the extracellular matrix. Induces cell attachment and spreading and plays a role in cell adhesion. Enhances incorporation of BMP1 in the fibronectin matrix of connective tissues, and subsequent proteolytic activation of lysyl oxidase LOX. The protein is Periostin (POSTN) of Homo sapiens (Human).